Here is a 230-residue protein sequence, read N- to C-terminus: Ribonuclease 3 (230 aa).

In terms of domain architecture, RNase III spans 10-133; sequence DPRLLSRIGY…IIGAIYLDSS (124 aa). Mg(2+) is bound at residue Glu46. Asp50 is an active-site residue. Residues Asp119 and Glu122 each coordinate Mg(2+). The active site involves Glu122. Residues 161-230 enclose the DRBM domain; it reads DPKSRLQEYL…AAEILKLLEQ (70 aa).

This sequence belongs to the ribonuclease III family. In terms of assembly, homodimer. Mg(2+) serves as cofactor.

The protein resides in the cytoplasm. It catalyses the reaction Endonucleolytic cleavage to 5'-phosphomonoester.. Its function is as follows. Digests double-stranded RNA. Involved in the processing of primary rRNA transcript to yield the immediate precursors to the large and small rRNAs (23S and 16S). Processes some mRNAs, and tRNAs when they are encoded in the rRNA operon. Processes pre-crRNA and tracrRNA of type II CRISPR loci if present in the organism. This is Ribonuclease 3 (rnc) from Acinetobacter baumannii (strain AB307-0294).